A 239-amino-acid polypeptide reads, in one-letter code: Orotidine 5'-phosphate decarboxylase (239 aa).

Substrate contacts are provided by residues D11, K33, 60–69, T117, R178, Q187, G207, and R208; that span reads DLKFHDIPTT. Catalysis depends on K62, which acts as the Proton donor.

It belongs to the OMP decarboxylase family. Type 1 subfamily. Homodimer.

The catalysed reaction is orotidine 5'-phosphate + H(+) = UMP + CO2. It functions in the pathway pyrimidine metabolism; UMP biosynthesis via de novo pathway; UMP from orotate: step 2/2. In terms of biological role, catalyzes the decarboxylation of orotidine 5'-monophosphate (OMP) to uridine 5'-monophosphate (UMP). This Nitrosospira multiformis (strain ATCC 25196 / NCIMB 11849 / C 71) protein is Orotidine 5'-phosphate decarboxylase.